We begin with the raw amino-acid sequence, 235 residues long: Type II secretion system protein N (235 aa).

Topologically, residues 1 to 34 are cytoplasmic; it reads MIPRRSSDITIKTRSDVLPFSGASSRWLQRYAPA. A helical; Signal-anchor for type II membrane protein membrane pass occupies residues 35–55; sequence LLAVALIIAMSISLAWQAAGW. At 56 to 235 the chain is on the periplasmic side; sequence LRLQRSPVAV…EPTTTPTESD (180 aa). A disordered region spans residues 205–235; the sequence is DALRQQMEATPIAEPAEEDSSEPTTTPTESD. Residues 226 to 235 are compositionally biased toward low complexity; it reads EPTTTPTESD.

The protein resides in the cell inner membrane. Its function is as follows. Involved in a type II secretion system (T2SS, formerly general secretion pathway, GSP) for the export of proteins. Required for the translocation of a variety of enzymes across the outer membrane. The chain is Type II secretion system protein N (xcpP) from Pseudomonas aeruginosa (strain ATCC 15692 / DSM 22644 / CIP 104116 / JCM 14847 / LMG 12228 / 1C / PRS 101 / PAO1).